Consider the following 218-residue polypeptide: Glutathione S-transferase Mu 7 (218 aa).

The GST N-terminal domain occupies Met-1 to Gly-88. Glutathione contacts are provided by residues Tyr-7 to Trp-8, Trp-46 to Lys-50, Asn-59 to Leu-60, and Gln-72 to Ser-73. The region spanning Thr-90–Met-208 is the GST C-terminal domain. Tyr-116 lines the substrate pocket.

It belongs to the GST superfamily. Mu family. In terms of assembly, homodimer.

The protein resides in the cytoplasm. It catalyses the reaction RX + glutathione = an S-substituted glutathione + a halide anion + H(+). Functionally, conjugation of reduced glutathione to a wide number of exogenous and endogenous hydrophobic electrophiles. The protein is Glutathione S-transferase Mu 7 (Gstm7) of Mus musculus (Mouse).